Reading from the N-terminus, the 545-residue chain is Chaperonin GroEL 2 (545 aa).

ATP is bound by residues 29–32 (TLGP), 86–90 (DGTTT), glycine 413, 479–481 (NAA), and aspartate 495.

Belongs to the chaperonin (HSP60) family. In terms of assembly, forms a cylinder of 14 subunits composed of two heptameric rings stacked back-to-back. Interacts with the co-chaperonin GroES.

It localises to the cytoplasm. It carries out the reaction ATP + H2O + a folded polypeptide = ADP + phosphate + an unfolded polypeptide.. Functionally, together with its co-chaperonin GroES, plays an essential role in assisting protein folding. The GroEL-GroES system forms a nano-cage that allows encapsulation of the non-native substrate proteins and provides a physical environment optimized to promote and accelerate protein folding. This Prochlorococcus marinus (strain MIT 9301) protein is Chaperonin GroEL 2.